A 734-amino-acid polypeptide reads, in one-letter code: Putative K(+)-stimulated pyrophosphate-energized sodium pump (734 aa).

5 consecutive transmembrane segments (helical) span residues 3 to 23, 58 to 78, 82 to 102, 134 to 154, and 169 to 189; these read SILF…AYYF, IVGC…YGFH, VWVP…GFLG, VMGL…YLLL, and LCVI…QALF. Residue Lys199 participates in substrate binding. 4 residues coordinate Mg(2+): Asp202, Asp206, Asn229, and Asp232. 7 consecutive transmembrane segments (helical) span residues 244-264, 275-295, 314-334, 336-356, 377-397, 398-418, and 423-443; these read LYES…AAFI, AVIA…IGIF, FGTN…LWLL, LDNW…GIVI, SGKT…MLST, AIPV…ASGF, and VGMG…TLGI. Position 455 (Asp455) interacts with Mg(2+). Transmembrane regions (helical) follow at residues 491–511, 557–577, 629–649, and 650–670; these read FAIG…IEEI, GMFL…NAVG, ILAP…GLLI, and GGLS…GAWD. Residues Asp670, Asp696, and Asp700 each contribute to the Ca(2+) site. Lys703 is a binding site for substrate. The chain crosses the membrane as a helical span at residues 712–732; that stretch reads ILIKLMSMVAIVMAGLTVAWS.

Belongs to the H(+)-translocating pyrophosphatase (TC 3.A.10) family. K(+)-stimulated subfamily. As to quaternary structure, homodimer. It depends on Mg(2+) as a cofactor.

The protein localises to the cell inner membrane. The enzyme catalyses Na(+)(in) + diphosphate + H2O = Na(+)(out) + 2 phosphate + H(+). Requires K(+) for maximal activity. Its function is as follows. Sodium pump that utilizes the energy of pyrophosphate hydrolysis as the driving force for Na(+) movement across the membrane. This chain is Putative K(+)-stimulated pyrophosphate-energized sodium pump, found in Bacteroides thetaiotaomicron (strain ATCC 29148 / DSM 2079 / JCM 5827 / CCUG 10774 / NCTC 10582 / VPI-5482 / E50).